Consider the following 354-residue polypeptide: Uroporphyrinogen decarboxylase (354 aa).

Substrate is bound by residues arginine 27–arginine 31, aspartate 77, tyrosine 154, serine 209, and histidine 327.

Belongs to the uroporphyrinogen decarboxylase family. As to quaternary structure, homodimer.

The protein localises to the cytoplasm. It carries out the reaction uroporphyrinogen III + 4 H(+) = coproporphyrinogen III + 4 CO2. Its pathway is porphyrin-containing compound metabolism; protoporphyrin-IX biosynthesis; coproporphyrinogen-III from 5-aminolevulinate: step 4/4. Its function is as follows. Catalyzes the decarboxylation of four acetate groups of uroporphyrinogen-III to yield coproporphyrinogen-III. In Shewanella baltica (strain OS185), this protein is Uroporphyrinogen decarboxylase.